The chain runs to 164 residues: Methanogen homoaconitase small subunit 2 (164 aa).

The YLRT motif lies at 26 to 29 (YLRT).

This sequence belongs to the LeuD family. LeuD type 2 subfamily. Heterotetramer of 2 HacA and 2 HacB proteins. Cannot form a complex with LeuC.

The enzyme catalyses (2R)-homocitrate = (2R,3S)-homoisocitrate. It catalyses the reaction (2R)-homocitrate = cis-homoaconitate + H2O. It carries out the reaction (2R,3S)-homoisocitrate = cis-homoaconitate + H2O. The catalysed reaction is cis-(homo)2aconitate + H2O = (2R,3S)-iso(homo)2citrate. The enzyme catalyses cis-(homo)3aconitate + H2O = (2R,3S)-iso(homo)3citrate. The protein operates within organic acid metabolism; 2-oxosuberate biosynthesis. Functionally, component of a hydro-lyase with broad substrate specificity for cis-unsaturated tricarboxylic acids. Catalyzes both the reversible dehydration of (R)-homocitrate ((R)-2-hydroxybutane-1,2,4-tricarboxylate) to produce cis-homoaconitate ((Z)-but-1-ene-1,2,4-tricarboxylate), and its hydration to homoisocitrate ((1R,2S)-1-hydroxybutane-1,2,4-tricarboxylate). Is also able to hydrate the analogous longer chain substrates cis-homo(2)-aconitate, cis-homo(3)-aconitate. These reactions are part of the biosynthesis pathway of coenzyme B. In Methanosarcina acetivorans (strain ATCC 35395 / DSM 2834 / JCM 12185 / C2A), this protein is Methanogen homoaconitase small subunit 2 (hacB2).